A 57-amino-acid chain; its full sequence is Small nuclear protein PRAC1 (57 aa).

Positions 38–57 are disordered; it reads RSDGSACNSGISGGRGRKIP.

In terms of tissue distribution, highly expressed in prostate, rectum, and distal colon, and weakly expressed in bladder. Expressed in prostate cancer cell lines.

The protein resides in the nucleus. In Homo sapiens (Human), this protein is Small nuclear protein PRAC1 (PRAC1).